The sequence spans 782 residues: Endonuclease MutS2 (782 aa).

Residue 336–343 (GPNTGGKT) participates in ATP binding. The region spanning 707-782 (LDLRGYRYED…GFGVTVATLK (76 aa)) is the Smr domain.

This sequence belongs to the DNA mismatch repair MutS family. MutS2 subfamily. In terms of assembly, homodimer. Binds to stalled ribosomes, contacting rRNA.

Functionally, endonuclease that is involved in the suppression of homologous recombination and thus may have a key role in the control of bacterial genetic diversity. In terms of biological role, acts as a ribosome collision sensor, splitting the ribosome into its 2 subunits. Detects stalled/collided 70S ribosomes which it binds and splits by an ATP-hydrolysis driven conformational change. Acts upstream of the ribosome quality control system (RQC), a ribosome-associated complex that mediates the extraction of incompletely synthesized nascent chains from stalled ribosomes and their subsequent degradation. Probably generates substrates for RQC. The sequence is that of Endonuclease MutS2 from Staphylococcus aureus (strain bovine RF122 / ET3-1).